Consider the following 141-residue polypeptide: Hemoglobin subunit alpha-D (141 aa).

One can recognise a Globin domain in the interval 1-141; it reads MLTAEDKKLI…VAAVLAEKYR (141 aa). Heme b contacts are provided by histidine 58 and histidine 87.

The protein belongs to the globin family. In terms of assembly, heterotetramer of two alpha-D chains and two beta chains. In terms of tissue distribution, red blood cells.

Its function is as follows. Involved in oxygen transport from the lung to the various peripheral tissues. The protein is Hemoglobin subunit alpha-D (HBAD) of Accipiter gentilis (Northern goshawk).